Consider the following 345-residue polypeptide: NADPH dehydrogenase (345 aa).

Position 23–26 (23–26 (SPMC)) interacts with FMN. Tyr-28 lines the substrate pocket. FMN is bound by residues Ala-60 and Gln-102. 164–167 (HGAH) is a substrate binding site. FMN contacts are provided by residues Arg-215 and 307–308 (GR).

Belongs to the NADH:flavin oxidoreductase/NADH oxidase family. NamA subfamily. In terms of assembly, homotetramer. It depends on FMN as a cofactor.

The catalysed reaction is A + NADPH + H(+) = AH2 + NADP(+). Catalyzes the reduction of the double bond of an array of alpha,beta-unsaturated aldehydes and ketones. It also reduces the nitro group of nitroester and nitroaromatic compounds. It could have a role in detoxification processes. This Bacillus thuringiensis (strain Al Hakam) protein is NADPH dehydrogenase.